A 277-amino-acid chain; its full sequence is MIRRPAVAGAFYERDPAALRRRIEWCFEHELGPGTLPAVGSMRRIKGVIAPHAGYMYSGPVAAHAYHELVSDGIPGTLVIICPNHTGMGSGVSLMQQGAWETPLGTVEIDSELAEAIVRESGIIDLDETAHLAEHSCEVHVPFIQYFTDNFRIVPVTMWMQGHETAADVGHAVASAIRETGRDAAVIASTDFTHYSPQDIAEATDRRIIDRITAMDDTGMYGVISELNATMCGYGPVAATIIASRILGATECDLLRYATSGDVTGDRSSVVGYAHLS.

Belongs to the MEMO1 family.

The chain is MEMO1 family protein MTH_45 from Methanothermobacter thermautotrophicus (strain ATCC 29096 / DSM 1053 / JCM 10044 / NBRC 100330 / Delta H) (Methanobacterium thermoautotrophicum).